A 348-amino-acid chain; its full sequence is MLSSSPSAAAPGIGGYQPQRGAAVFTAAQWAELEQQALIYKYLVAGVPVPGDLLLPIRPHSSAAATYSFANPAAAPFYHHHHHPSLSYYAYYGKKLDPEPWRCRRTDGKKWRCSKEAHPDSKYCERHMHRGRNRSRKPVESKTAAPAPQSQPQLSNVTTATHDTDAPLPSLTVGAKTHGLSLGGAGSSQFHVDAPSYGSKYSLGAKADVGELSFFSGASGNTRGFTIDSPTDSSWHSLPSSVPPYPMSKPRDSGLLPGAYSYSHLEPSQELGQVTIASLSQEQERRSFGGGAGGMLGNVKHENQPLRPFFDEWPGRRDSWSEMDEERSNQTSFSTTQLSISIPMPRCD.

The region spanning 24 to 59 (VFTAAQWAELEQQALIYKYLVAGVPVPGDLLLPIRP) is the QLQ domain. 2 short sequence motifs (bipartite nuclear localization signal) span residues 94–112 (KKLD…KKWR) and 130–137 (RGRNRSRK). In terms of domain architecture, WRC spans 97 to 141 (DPEPWRCRRTDGKKWRCSKEAHPDSKYCERHMHRGRNRSRKPVES). 2 disordered regions span residues 125–165 (ERHM…HDTD) and 306–348 (LRPF…PRCD). A compositionally biased stretch (basic residues) spans 127 to 136 (HMHRGRNRSR). Over residues 148-161 (PQSQPQLSNVTTAT) the composition is skewed to polar residues. Residues 306-320 (LRPFFDEWPGRRDSW) are compositionally biased toward basic and acidic residues. A compositionally biased stretch (polar residues) spans 329 to 340 (NQTSFSTTQLSI).

The protein belongs to the GRF family.

The protein localises to the nucleus. Transcription activator that plays a regulatory role in gibberellin-induced stem elongation. In Oryza sativa subsp. japonica (Rice), this protein is Growth-regulating factor 5 (GRF5).